Reading from the N-terminus, the 1342-residue chain is MVYSYTEKKRIRKDFGTRPQVLDIPYLLSIQLDSFDKFIEQDPEGQYGLEAAFRSVFPIQSYNGNSELQYVSYRLGEPVFDVKECQIRGVTYSKPLRVKLRLVIFDKDAPAGTVKDIKEQEVYMGEIPLMTDNGTFVINGTERVIVSQLHRSPGVFFDSDKGKTHSSGKVLYNARVIPYRGSWLDFEFDPKDNLYVRIDRRRKLPASIILRALGKTSEEILDIFFEKVNFEVKDQTLLMELVPDRLRGETASFDIEANGKTYVEQGRRVTARHIRQLEKDGVDHIEVPVEYIVGKVASKDYINEATGEIIVNANQEISLEALANLSQAGHKSLETLFTNDLDHGPFMSETLRIDSTVDRISALVEIYRMMRPGEPPTKEAAEALFESLFFSEERYDLSTVGRMKFNSSIGREDAQEQGTLDELDIVEVMKKLIAIRNGKGEVDDIDHLGNRRIRSVGEMAENQFRVGLVRVERAVKERLSLGDLDAIMPQDLINAKPISAAVKEFFGSSQLSQFMDQNNPLSEVTHKRRISALGPGGLTRERAGFEVRDVHVTHYGRLCPIETPEGPNIGLINSLSAFARCNEYGFLETPYRRVVDGVVTDEVDYLSAIEEGQFVIAQANAALTEEGGFADELITARQKGESGLHPREHAQYMDVATNQVVSIAASLIPFLEHDDANRALMGANMQRQAVPTLKADKPLVGTGIERNVAVDSGVTAVAKRGGVIQSVDASRIVVKVNEEELVPGEAGIDIYNLTKYTRSNQNTCINQRPCVMPGEPVSRGDVLADGPSTDLGELALGQNMRIAFMPWNGYNFEDSILVSERVVQEDRFTTIHIQELTCVARDTKLGSEEITADIPNVGESALSKLDESGIVYIGAEVKGGDILVGKVTPKGETQLTPEEKLLRAIFGEKASDVKDTSLRVPNSVSGTIIDVQVFTRDGVEKDKRALEIEQMQLKEAKKDLTEEFQILEGGLLNRVRAVLIDGGYSEAKLDTTDRKKWLELTLEDDALQTQLEQLAEQWDELKADFDKKFETKRRKITQGDDLAPGVLKIVKVYLAVKRRIQPGDKMAGRHGNKGVISKINPVEDMPYDEKGQPVDIVLNPLGVPSRMNIGQILEVHLGLAAKGIGDKINQMVKEQQELAKFREFLQKVYDLGETRQKVDIASLSDDEVRTLIKNLRGGLPIATPVFDGAPEASIKALLKLADLPESGQLKLFDGRTGDQFERPVTVGYMYMLKLNHLVDDKMHARSTGSYSLVTQQPLGGKAQFGGQRFGEMEVWALEAYGAAYTLQEMLTVKSDDVNGRTKMYKNIVDGNHSMEPGMPESFNVLLKEIRSLGINIELEDEE.

The protein belongs to the RNA polymerase beta chain family. The RNAP catalytic core consists of 2 alpha, 1 beta, 1 beta' and 1 omega subunit. When a sigma factor is associated with the core the holoenzyme is formed, which can initiate transcription.

It catalyses the reaction RNA(n) + a ribonucleoside 5'-triphosphate = RNA(n+1) + diphosphate. DNA-dependent RNA polymerase catalyzes the transcription of DNA into RNA using the four ribonucleoside triphosphates as substrates. The polypeptide is DNA-directed RNA polymerase subunit beta (Vibrio campbellii (strain ATCC BAA-1116)).